The sequence spans 1193 residues: uncharacterized protein (1193 aa).

Residues 1-25 (MKIKFINYLLLFFIIFLNYNGFVKS) form the signal peptide. Residues 26–1172 (DCYQELDLVL…PQDPSDELST (1147 aa)) lie on the Extracellular side of the membrane. N-linked (GlcNAc...) asparagine glycans are attached at residues Asn90, Asn183, Asn226, Asn265, Asn281, Asn345, Asn357, Asn436, Asn516, Asn552, Asn583, Asn627, Asn712, Asn765, Asn822, Asn938, Asn1038, and Asn1092. The helical transmembrane segment at 1173 to 1193 (SSFVQVNLLFLSILIFTIFIF) threads the bilayer.

It localises to the membrane. This is an uncharacterized protein from Dictyostelium discoideum (Social amoeba).